The sequence spans 323 residues: tRNA uridine(34) hydroxylase (323 aa).

The region spanning 127–221 is the Rhodanese domain; sequence QDENTVVLDA…YGQDPEVQGD (95 aa). Cys-181 functions as the Cysteine persulfide intermediate in the catalytic mechanism.

Belongs to the TrhO family.

The catalysed reaction is uridine(34) in tRNA + AH2 + O2 = 5-hydroxyuridine(34) in tRNA + A + H2O. Catalyzes oxygen-dependent 5-hydroxyuridine (ho5U) modification at position 34 in tRNAs. The sequence is that of tRNA uridine(34) hydroxylase from Oceanobacillus iheyensis (strain DSM 14371 / CIP 107618 / JCM 11309 / KCTC 3954 / HTE831).